The chain runs to 121 residues: NADH-quinone oxidoreductase subunit 7 (121 aa).

Helical transmembrane passes span 11–31 (ILVF…AAAV), 65–85 (LVSI…PWAV), and 93–113 (VAFW…AYEW).

This sequence belongs to the complex I subunit 3 family. In terms of assembly, NDH-1 is composed of at least 14 different subunits, Nqo1 to Nqo14. The complex has a L-shaped structure, with the hydrophobic arm (subunits Nqo7, Nqo8, Nqo10 to Nqo14) embedded in the inner membrane and the hydrophilic peripheral arm (subunits Nqo1 to Nqo6, Nqo9) protruding into the bacterial cytoplasm. The hydrophilic domain contains all the redox centers.

It is found in the cell inner membrane. The catalysed reaction is a quinone + NADH + 5 H(+)(in) = a quinol + NAD(+) + 4 H(+)(out). Functionally, NDH-1 shuttles electrons from NADH, via FMN and iron-sulfur (Fe-S) centers, to quinones in the respiratory chain. The immediate electron acceptor for the enzyme in this species is believed to be ubiquinone. Couples the redox reaction to proton translocation (for every two electrons transferred, four hydrogen ions are translocated across the cytoplasmic membrane), and thus conserves the redox energy in a proton gradient. The protein is NADH-quinone oxidoreductase subunit 7 (nqo7) of Paracoccus denitrificans.